Here is a 146-residue protein sequence, read N- to C-terminus: Cystatin-C (146 aa).

The N-terminal stretch at 1 to 26 (MAGPLRAPLLLLAILAVALAVSPAAG) is a signal peptide. Ser43 is modified (phosphoserine). The short motif at 81–85 (QIVAG) is the Secondary area of contact element. Disulfide bonds link Cys99–Cys109 and Cys123–Cys143.

This sequence belongs to the cystatin family.

The protein localises to the secreted. As an inhibitor of cysteine proteinases, this protein is thought to serve an important physiological role as a local regulator of this enzyme activity. In Macaca mulatta (Rhesus macaque), this protein is Cystatin-C (CST3).